The primary structure comprises 151 residues: 3-hydroxyacyl-[acyl-carrier-protein] dehydratase FabZ (151 aa).

Residue His54 is part of the active site.

Belongs to the thioester dehydratase family. FabZ subfamily.

The protein resides in the cytoplasm. It carries out the reaction a (3R)-hydroxyacyl-[ACP] = a (2E)-enoyl-[ACP] + H2O. Involved in unsaturated fatty acids biosynthesis. Catalyzes the dehydration of short chain beta-hydroxyacyl-ACPs and long chain saturated and unsaturated beta-hydroxyacyl-ACPs. The protein is 3-hydroxyacyl-[acyl-carrier-protein] dehydratase FabZ of Buchnera aphidicola subsp. Acyrthosiphon pisum (strain 5A).